Here is a 241-residue protein sequence, read N- to C-terminus: Tetrahydromethanopterin S-methyltransferase subunit A (241 aa).

Over 1-220 (MANKREPAPG…AKWQAGYYNG (220 aa)) the chain is Cytoplasmic. Residue His85 participates in 5-hydroxybenzimidazolylcob(I)amide binding. The helical transmembrane segment at 221-241 (KIQGIATGLFLMLLIMGILMF) threads the bilayer.

It belongs to the MtrA family. As to quaternary structure, the complex is composed of 8 subunits; MtrA, MtrB, MtrC, MtrD, MtrE, MtrF, MtrG and MtrH. 5-hydroxybenzimidazolylcob(I)amide serves as cofactor.

The protein resides in the cell membrane. It carries out the reaction 5-methyl-5,6,7,8-tetrahydromethanopterin + coenzyme M + 2 Na(+)(in) = 5,6,7,8-tetrahydromethanopterin + methyl-coenzyme M + 2 Na(+)(out). The protein operates within one-carbon metabolism; methanogenesis from CO(2); methyl-coenzyme M from 5,10-methylene-5,6,7,8-tetrahydromethanopterin: step 2/2. Its function is as follows. Part of a complex that catalyzes the formation of methyl-coenzyme M and tetrahydromethanopterin from coenzyme M and methyl-tetrahydromethanopterin. This is an energy-conserving, sodium-ion translocating step. The polypeptide is Tetrahydromethanopterin S-methyltransferase subunit A (Methanocaldococcus jannaschii (strain ATCC 43067 / DSM 2661 / JAL-1 / JCM 10045 / NBRC 100440) (Methanococcus jannaschii)).